A 460-amino-acid polypeptide reads, in one-letter code: Bifunctional beta-D-glucosidase/beta-D-fucosidase (460 aa).

Residue Glu168 is the Proton donor of the active site. The active-site Nucleophile is Glu362.

It belongs to the glycosyl hydrolase 1 family. In terms of assembly, monomer.

It is found in the secreted. It catalyses the reaction Hydrolysis of terminal, non-reducing beta-D-glucosyl residues with release of beta-D-glucose.. The enzyme catalyses Hydrolysis of terminal non-reducing beta-D-fucose residues in beta-D-fucosides.. With respect to regulation, inhibited by Cu(2+), Ag(+) and Hg(+), but not by other cations such as Mg(2+), Ca(2+), Mn(2+) and Co(2+). Inhibited by 1-amino-1-deoxy-D-glucose and p-chloromercuribenzoic acid, but not by EDTA or dithiothreitol. Inhibited by the disaccharides sucrose, lactose and cellobiose. The monosaccharides D-fructose, D-mannose, D-xylose and D-glucose increase the beta-D-fucosidase activity, but not the beta-D-glucosidase activity. D-glucose inhibits the beta-D-glucosidase activity, but promotes the beta-D-fucosidase activity. D-fucose inhibits the beta-D-glucosidase activity and does not significantly affect the beta-D-fucosidase activity. Bifunctional beta-D-glucosidase/beta-D-fucosidase. Activity towards pNP-beta-D-fucoside is about 80-85% of the activity towards pNP-beta-D-glucoside. Also has slight activity (less than 10%) towards pNP-beta-D-galactoside, and very low activity (less than 1%) towards pNP-beta-D-xyloside. Hydrolyzes laminaribiose, sophorose, cellobiose and gentobiose. Not active against maltose, pNP-alpha-D-glucoside or pNP-beta-L-fucoside. This Bifidobacterium breve protein is Bifunctional beta-D-glucosidase/beta-D-fucosidase.